Reading from the N-terminus, the 320-residue chain is Lipoyl synthase (320 aa).

7 residues coordinate [4Fe-4S] cluster: Cys67, Cys72, Cys78, Cys93, Cys97, Cys100, and Ser307. The Radical SAM core domain maps to 79–296 (FNHGTATFMI…RDKANEMGFE (218 aa)).

This sequence belongs to the radical SAM superfamily. Lipoyl synthase family. The cofactor is [4Fe-4S] cluster.

It is found in the cytoplasm. The enzyme catalyses [[Fe-S] cluster scaffold protein carrying a second [4Fe-4S](2+) cluster] + N(6)-octanoyl-L-lysyl-[protein] + 2 oxidized [2Fe-2S]-[ferredoxin] + 2 S-adenosyl-L-methionine + 4 H(+) = [[Fe-S] cluster scaffold protein] + N(6)-[(R)-dihydrolipoyl]-L-lysyl-[protein] + 4 Fe(3+) + 2 hydrogen sulfide + 2 5'-deoxyadenosine + 2 L-methionine + 2 reduced [2Fe-2S]-[ferredoxin]. It functions in the pathway protein modification; protein lipoylation via endogenous pathway; protein N(6)-(lipoyl)lysine from octanoyl-[acyl-carrier-protein]: step 2/2. Catalyzes the radical-mediated insertion of two sulfur atoms into the C-6 and C-8 positions of the octanoyl moiety bound to the lipoyl domains of lipoate-dependent enzymes, thereby converting the octanoylated domains into lipoylated derivatives. The protein is Lipoyl synthase of Haemophilus influenzae (strain PittEE).